Here is a 305-residue protein sequence, read N- to C-terminus: tRNA dimethylallyltransferase (305 aa).

Gly9 to Thr16 lines the ATP pocket. Position 11–16 (Thr11–Thr16) interacts with substrate. 3 interaction with substrate tRNA regions span residues Asp34 to Leu37, Gln158 to Arg162, and Arg239 to Arg244.

The protein belongs to the IPP transferase family. In terms of assembly, monomer. The cofactor is Mg(2+).

The enzyme catalyses adenosine(37) in tRNA + dimethylallyl diphosphate = N(6)-dimethylallyladenosine(37) in tRNA + diphosphate. Functionally, catalyzes the transfer of a dimethylallyl group onto the adenine at position 37 in tRNAs that read codons beginning with uridine, leading to the formation of N6-(dimethylallyl)adenosine (i(6)A). This is tRNA dimethylallyltransferase from Aeromonas hydrophila subsp. hydrophila (strain ATCC 7966 / DSM 30187 / BCRC 13018 / CCUG 14551 / JCM 1027 / KCTC 2358 / NCIMB 9240 / NCTC 8049).